Consider the following 82-residue polypeptide: Diphthamide biosynthesis protein 3 (82 aa).

The 57-residue stretch at 3 to 59 (TYDEIEIEDMTFEPENQMFTYPCPCGDRFQIYLDDMFEGEKVAVCPSCSLMIDVVFD) folds into the DPH-type MB domain. Fe cation is bound by residues Cys-25, Cys-27, Cys-47, and Cys-50. The required for interaction with the elongator complex stretch occupies residues 66–82 (YYEEAGIHPPEPIAAAA).

It belongs to the DPH3 family. Component of the 2-(3-amino-3-carboxypropyl)histidine synthase complex composed of DPH1, DPH2, KTI11/DPH3 and a NADH-dependent reductase, predominantly CBR1. Interacts with DPH1. Interacts with DPH2. Interacts with CBR1. Interacts with elongation factor 2. Interacts with ATS1/KTI13; the interaction is direct. Interacts with the 40S ribosomal protein RPS7A. Interacts with the 40S ribosomal protein RPS19A. Interacts with the elongator complex subunit IKI3/ELP1. Interacts with the elongator complex subunit ELP2. Interacts with the elongator complex subunit ELP3. Interacts with the elongator complex subunit ELP5.

It is found in the cytoplasm. The protein resides in the nucleus. It carries out the reaction [3Fe-4S](1+)-[protein] + Fe(2+)-[Dph3] = [3Fe-4S](0)-[protein] + Fe(3+)-[Dph3]. The catalysed reaction is 2 [3Fe-4S](0)-[protein] + 2 Fe(2+)-[Dph3] + NADH = 2 [4Fe-4S](1+)-[protein] + 2 [Dph3] + NAD(+) + H(+). It functions in the pathway protein modification; peptidyl-diphthamide biosynthesis. Its function is as follows. Required for the first step of diphthamide biosynthesis, a post-translational modification of histidine which occurs in elongation factor 2. DPH1 and DPH2 transfer a 3-amino-3-carboxypropyl (ACP) group from S-adenosyl-L-methionine (SAM) to a histidine residue, the reaction is assisted by a reduction system comprising KTI11/DPH3 and a NADH-dependent reductase, predominantly CBR1. Acts as an electron donor to reduce the Fe-S cluster in DPH1-DPH2 keeping the [4Fe-4S] clusters in the active and reduced state. Restores iron to DPH1-DPH2 iron-sulfur clusters which have degraded from [4Fe-4S] to [3Fe-4S] by donating an iron atom to reform [4Fe-4S] clusters, in a manner dependent on the presence of elongation factor 2 and SAM. Together with ATS1; associates with the elongator complex and is required for tRNA Wobble base modifications mediated by the elongator complex. The elongator complex is required for multiple tRNA modifications, including mcm5U (5-methoxycarbonylmethyl uridine), mcm5s 2U (5-methoxycarbonylmethyl-2-thiouridine), and ncm5U (5-carbamoylmethyl uridine). The protein is Diphthamide biosynthesis protein 3 of Saccharomyces cerevisiae (strain ATCC 204508 / S288c) (Baker's yeast).